Reading from the N-terminus, the 101-residue chain is Large ribosomal subunit protein uL24 (101 aa).

The protein belongs to the universal ribosomal protein uL24 family. In terms of assembly, part of the 50S ribosomal subunit.

In terms of biological role, one of two assembly initiator proteins, it binds directly to the 5'-end of the 23S rRNA, where it nucleates assembly of the 50S subunit. One of the proteins that surrounds the polypeptide exit tunnel on the outside of the subunit. This chain is Large ribosomal subunit protein uL24, found in Jannaschia sp. (strain CCS1).